The following is a 980-amino-acid chain: Conserved oligomeric Golgi complex subunit 1 (980 aa).

At A2 the chain carries N-acetylalanine. S7 is subject to Phosphoserine.

Belongs to the COG1 family. Component of the conserved oligomeric Golgi complex which is composed of eight different subunits and is required for normal Golgi morphology and localization.

Its subcellular location is the golgi apparatus membrane. In terms of biological role, required for normal Golgi function. This Homo sapiens (Human) protein is Conserved oligomeric Golgi complex subunit 1 (COG1).